Consider the following 166-residue polypeptide: Large ribosomal subunit protein uL10 (166 aa).

It belongs to the universal ribosomal protein uL10 family. In terms of assembly, part of the ribosomal stalk of the 50S ribosomal subunit. The N-terminus interacts with L11 and the large rRNA to form the base of the stalk. The C-terminus forms an elongated spine to which L12 dimers bind in a sequential fashion forming a multimeric L10(L12)X complex.

Its function is as follows. Forms part of the ribosomal stalk, playing a central role in the interaction of the ribosome with GTP-bound translation factors. The chain is Large ribosomal subunit protein uL10 from Ureaplasma urealyticum serovar 10 (strain ATCC 33699 / Western).